The chain runs to 527 residues: Peptide chain release factor 3 (527 aa).

The tr-type G domain occupies 9–277; sequence AKRRTFAIIS…AVVDWAPRPL (269 aa). GTP contacts are provided by residues 18-25, 86-90, and 140-143; these read SHPDAGKT, DTPGH, and NKLD.

It belongs to the TRAFAC class translation factor GTPase superfamily. Classic translation factor GTPase family. PrfC subfamily.

The protein localises to the cytoplasm. In terms of biological role, increases the formation of ribosomal termination complexes and stimulates activities of RF-1 and RF-2. It binds guanine nucleotides and has strong preference for UGA stop codons. It may interact directly with the ribosome. The stimulation of RF-1 and RF-2 is significantly reduced by GTP and GDP, but not by GMP. The protein is Peptide chain release factor 3 of Pseudomonas fluorescens (strain Pf0-1).